Here is a 292-residue protein sequence, read N- to C-terminus: Ribonuclease Z (292 aa).

Zn(2+) is bound by residues His-60, His-62, Asp-64, His-65, His-132, Asp-200, and His-256. Residue Asp-64 is the Proton acceptor of the active site.

This sequence belongs to the RNase Z family. As to quaternary structure, homodimer. The cofactor is Zn(2+).

The enzyme catalyses Endonucleolytic cleavage of RNA, removing extra 3' nucleotides from tRNA precursor, generating 3' termini of tRNAs. A 3'-hydroxy group is left at the tRNA terminus and a 5'-phosphoryl group is left at the trailer molecule.. Zinc phosphodiesterase, which displays some tRNA 3'-processing endonuclease activity. Probably involved in tRNA maturation, by removing a 3'-trailer from precursor tRNA. This Sulfolobus acidocaldarius (strain ATCC 33909 / DSM 639 / JCM 8929 / NBRC 15157 / NCIMB 11770) protein is Ribonuclease Z.